Consider the following 343-residue polypeptide: Geranylgeranyl pyrophosphate synthase (343 aa).

Residues 1-12 show a composition bias toward basic and acidic residues; that stretch reads MAYTVEPREHSK. Residues 1–26 are disordered; it reads MAYTVEPREHSKNTTLPTVAMPPSPP. Lys-69, Arg-72, and His-101 together coordinate isopentenyl diphosphate. Residues Asp-108 and Asp-112 each coordinate Mg(2+). Arg-117 lines the dimethylallyl diphosphate pocket. Arg-118 is an isopentenyl diphosphate binding site. Residues Thr-196 and Gln-229 each contribute to the dimethylallyl diphosphate site. Asp-232 provides a ligand contact to Mg(2+). Dimethylallyl diphosphate is bound by residues Asn-236, Lys-246, and Lys-256.

The protein belongs to the FPP/GGPP synthase family. The cofactor is Mg(2+).

The catalysed reaction is isopentenyl diphosphate + dimethylallyl diphosphate = (2E)-geranyl diphosphate + diphosphate. It catalyses the reaction isopentenyl diphosphate + (2E)-geranyl diphosphate = (2E,6E)-farnesyl diphosphate + diphosphate. It carries out the reaction isopentenyl diphosphate + (2E,6E)-farnesyl diphosphate = (2E,6E,10E)-geranylgeranyl diphosphate + diphosphate. Its pathway is mycotoxin biosynthesis. Its function is as follows. Geranylgeranyl pyrophosphate synthase; part of the gene cluster that mediates the biosynthesis of aphidicolin, a specific inhibitor of eukaryotic DNA synthesis and DNA polymerase alpha. The geranylgeranyl pyrophosphate synthase GGS is required for supplying a sufficient amount of geranylgeranyl diphosphate (GGDP), the general precursor of diterpenes. The diterpene synthase ACS then catalyzes the conversion of geranylgeranyl diphosphate to aphidicolan-16-beta-ol via the intermediate syn-copalyldiphosphate (syn-CDP). In addition to aphidicolan-16-beta-ol, the enzyme also produces low levels of amphidicol-15-ene and amphidicol-16-ene. The cytochrome P450 monooxygenase P450-2 then catalyzes the two-step hydroxylation from aphidicolan-16-beta-ol to 3-deoxyaphidicolin via a 17,3-deoxyaphidicolin intermediate. Finally, the cytochrome P450 monooxygenase P450-1 converts 3-deoxyaphidicolin to aphidicolin. This Neocamarosporium betae (Beet black rot fungus) protein is Geranylgeranyl pyrophosphate synthase (GGS).